We begin with the raw amino-acid sequence, 118 residues long: Transcription factor PAR1 (118 aa).

Positions 1–58 are disordered; the sequence is MEETLATPDATRRSLSPSCSATVKSRAAGFERRTKRRLSETNASVREDREEAEEEEDE. Residues 13 to 23 show a composition bias toward polar residues; sequence RSLSPSCSATV. The region spanning 43-92 is the bHLH domain; sequence ASVREDREEAEEEEDEVKEKIEALQRIIPGGAALGVDALFEETAGYILSL.

It belongs to the bHLH protein family. As to quaternary structure, homodimer.

The protein resides in the nucleus. Functionally, atypical bHLH transcription factor that acts as a negative regulator of a variety of shade avoidance syndrome (SAS) responses, including seedling elongation and photosynthetic pigment accumulation. Acts as a direct transcriptional repressor of two auxin-responsive genes, SAUR15 and SAUR68. May function in integrating shade and hormone transcriptional networks in response to light and auxin changes. The protein is Transcription factor PAR1 (PAR1) of Arabidopsis thaliana (Mouse-ear cress).